The chain runs to 453 residues: uncharacterized protein (453 aa).

It to yeast RIT1.

This is an uncharacterized protein from Schizosaccharomyces pombe (strain 972 / ATCC 24843) (Fission yeast).